We begin with the raw amino-acid sequence, 556 residues long: Urease subunit alpha 1 (556 aa).

Residues G127 to L556 form the Urease domain. Ni(2+) contacts are provided by H132, H134, and K212. N6-carboxylysine is present on K212. H214 serves as a coordination point for substrate. Ni(2+) is bound by residues H241 and H267. Catalysis depends on H315, which acts as the Proton donor. Ni(2+) is bound at residue D355.

It belongs to the metallo-dependent hydrolases superfamily. Urease alpha subunit family. As to quaternary structure, may form a heterohexamer of 3 UreC (alpha) and 3 UreAB (gamma/beta) subunits. May also form a heterotrimer of UreA (gamma), UreB (beta) and UreC (alpha) subunits. Three heterotrimers associate to form the active enzyme. Ni cation serves as cofactor. Post-translationally, carboxylation allows a single lysine to coordinate two nickel ions.

The protein resides in the cytoplasm. It catalyses the reaction urea + 2 H2O + H(+) = hydrogencarbonate + 2 NH4(+). It participates in nitrogen metabolism; urea degradation; CO(2) and NH(3) from urea (urease route): step 1/1. The polypeptide is Urease subunit alpha 1 (Streptomyces avermitilis (strain ATCC 31267 / DSM 46492 / JCM 5070 / NBRC 14893 / NCIMB 12804 / NRRL 8165 / MA-4680)).